Here is a 295-residue protein sequence, read N- to C-terminus: uncharacterized protein (295 aa).

A signal peptide spans 1–19 (MRKLLLIITVFFTFNVAQA).

This is an uncharacterized protein from Rickettsia conorii (strain ATCC VR-613 / Malish 7).